Consider the following 248-residue polypeptide: MSFVVIIPARYASTRLPGKPLVDINGKPMIVHVLERARESGAERIIVATDHEDVARAVEAAGGEVCMTRADHQSGTERLAEVVEKCAFSDDTVIVNVQGDEPMIPATIIRQVADNLAQRQVGMATLAVPIHNAEEAFNPNAVKVVLDAEGYALYFSRATIPWDRDRFAEGLETVGDNFLRHLGIYGYRAGFIRRYVNWQPSPLEHIEMLEQLRVLWYGEKIHVAVAQEVPGTGVDTPEDLERVRAEMR.

It belongs to the KdsB family.

Its subcellular location is the cytoplasm. It carries out the reaction 3-deoxy-alpha-D-manno-oct-2-ulosonate + CTP = CMP-3-deoxy-beta-D-manno-octulosonate + diphosphate. It participates in nucleotide-sugar biosynthesis; CMP-3-deoxy-D-manno-octulosonate biosynthesis; CMP-3-deoxy-D-manno-octulosonate from 3-deoxy-D-manno-octulosonate and CTP: step 1/1. Its pathway is bacterial outer membrane biogenesis; lipopolysaccharide biosynthesis. In terms of biological role, activates KDO (a required 8-carbon sugar) for incorporation into bacterial lipopolysaccharide in Gram-negative bacteria. This is 3-deoxy-manno-octulosonate cytidylyltransferase from Escherichia coli (strain K12 / MC4100 / BW2952).